Here is a 391-residue protein sequence, read N- to C-terminus: tRNA (cytosine(38)-C(5))-methyltransferase (391 aa).

Residues 4-391 (LRALELYSGI…VAKLIKILCD (388 aa)) enclose the SAM-dependent MTase C5-type domain. S-adenosyl-L-methionine is bound by residues 13–15 (IGG), Asp-34, 57–58 (IE), and Ser-76. Cys-79 is a catalytic residue. Position 376 (Ser-376) interacts with S-adenosyl-L-methionine.

The protein belongs to the class I-like SAM-binding methyltransferase superfamily. C5-methyltransferase family.

It is found in the cytoplasm. It catalyses the reaction cytidine(38) in tRNA + S-adenosyl-L-methionine = 5-methylcytidine(38) in tRNA + S-adenosyl-L-homocysteine + H(+). Specifically methylates cytosine 38 in the anticodon loop of tRNA(Asp). Has higher activity on tRNA(Asp) modified with queuosine at position 34. The protein is tRNA (cytosine(38)-C(5))-methyltransferase (TRDMT1) of Bos taurus (Bovine).